The following is a 245-amino-acid chain: Retrovirus-related Pol polyprotein from type-1 retrotransposable element R1 (245 aa).

The region spanning 1–105 is the Reverse transcriptase domain; it reads LKDGTGIVAA…VDLETYCNKA (105 aa). The interval 106-245 is nucleic acid-binding endonuclease; the sequence is EVRQKFREKE…IVRDDSNLEQ (140 aa).

It catalyses the reaction DNA(n) + a 2'-deoxyribonucleoside 5'-triphosphate = DNA(n+1) + diphosphate. This is Retrovirus-related Pol polyprotein from type-1 retrotransposable element R1 from Popillia japonica (Japanese beetle).